The primary structure comprises 200 residues: Putative glucose-6-phosphate isomerase 2 (200 aa).

4 residues coordinate Fe cation: H92, H94, E101, and H140.

It belongs to the archaeal-type GPI family. Homodimer. Requires Fe cation as cofactor.

The protein resides in the cytoplasm. The catalysed reaction is alpha-D-glucose 6-phosphate = beta-D-fructose 6-phosphate. It participates in carbohydrate degradation; glycolysis; D-glyceraldehyde 3-phosphate and glycerone phosphate from D-glucose: step 2/4. In Rhizobium meliloti (strain 1021) (Ensifer meliloti), this protein is Putative glucose-6-phosphate isomerase 2 (pgiA2).